We begin with the raw amino-acid sequence, 393 residues long: Riboflavin biosynthesis protein RibBA (393 aa).

Positions 1–200 (MQFDNIDSAL…IDDLIEYRKK (200 aa)) are DHBP synthase. Residues 27-28 (RE), aspartate 32, 139-143 (RNGHT), and glutamate 163 each bind D-ribulose 5-phosphate. Glutamate 28 contacts Mg(2+). Histidine 142 provides a ligand contact to Mg(2+). The GTP cyclohydrolase II stretch occupies residues 201 to 393 (LEPEIEFKAK…TKKIKMGHLI (193 aa)). 249–253 (RLHSA) serves as a coordination point for GTP. Zn(2+) is bound by residues cysteine 254, cysteine 265, and cysteine 267. Residues glutamine 270, 291–293 (EGR), and threonine 313 each bind GTP. The Proton acceptor; for GTP cyclohydrolase activity role is filled by aspartate 325. Arginine 327 functions as the Nucleophile; for GTP cyclohydrolase activity in the catalytic mechanism. Positions 348 and 353 each coordinate GTP.

It in the N-terminal section; belongs to the DHBP synthase family. This sequence in the C-terminal section; belongs to the GTP cyclohydrolase II family. Requires Mg(2+) as cofactor. The cofactor is Mn(2+). It depends on Zn(2+) as a cofactor.

It catalyses the reaction D-ribulose 5-phosphate = (2S)-2-hydroxy-3-oxobutyl phosphate + formate + H(+). The enzyme catalyses GTP + 4 H2O = 2,5-diamino-6-hydroxy-4-(5-phosphoribosylamino)-pyrimidine + formate + 2 phosphate + 3 H(+). The protein operates within cofactor biosynthesis; riboflavin biosynthesis; 2-hydroxy-3-oxobutyl phosphate from D-ribulose 5-phosphate: step 1/1. Its pathway is cofactor biosynthesis; riboflavin biosynthesis; 5-amino-6-(D-ribitylamino)uracil from GTP: step 1/4. Functionally, catalyzes the conversion of D-ribulose 5-phosphate to formate and 3,4-dihydroxy-2-butanone 4-phosphate. Catalyzes the conversion of GTP to 2,5-diamino-6-ribosylamino-4(3H)-pyrimidinone 5'-phosphate (DARP), formate and pyrophosphate. This Staphylococcus aureus (strain COL) protein is Riboflavin biosynthesis protein RibBA.